We begin with the raw amino-acid sequence, 345 residues long: tRNA pseudouridine synthase B (345 aa).

The Nucleophile role is filled by Asp39.

The protein belongs to the pseudouridine synthase TruB family. Type 1 subfamily.

The enzyme catalyses uridine(55) in tRNA = pseudouridine(55) in tRNA. In terms of biological role, responsible for synthesis of pseudouridine from uracil-55 in the psi GC loop of transfer RNAs. This chain is tRNA pseudouridine synthase B, found in Rickettsia peacockii (strain Rustic).